The chain runs to 82 residues: MAFTLYSLMQAALLCVNAIAVLHEERFLKNIGWGTDQGIGGFGEEPGIKSQLMNLIRSVRTVMRVPLIIVNSITIVLLLLFG.

The next 2 helical transmembrane spans lie at 2–22 (AFTL…IAVL) and 62–82 (VMRV…LLFG).

It belongs to the YOS1 family.

Its subcellular location is the endoplasmic reticulum membrane. Regulator of endoplasmic reticulum secretion that acts as a key determinant of brain size. Required for secretion of extracellular matrix proteins. Required for correct brain development by depositing sufficient extracellular matrix proteins for tissue integrity and the proliferation of neural progenitors. Acts as a regulator of the unfolded protein response (UPR). This Mus musculus (Mouse) protein is Immediate early response 3-interacting protein 1.